The primary structure comprises 305 residues: Ribonuclease HIII (305 aa).

Residues tryptophan 91–leucine 305 form the RNase H type-2 domain. 3 residues coordinate a divalent metal cation: aspartate 97, glutamate 98, and aspartate 201.

Belongs to the RNase HII family. RnhC subfamily. Requires Mn(2+) as cofactor. It depends on Mg(2+) as a cofactor.

It localises to the cytoplasm. The enzyme catalyses Endonucleolytic cleavage to 5'-phosphomonoester.. Functionally, endonuclease that specifically degrades the RNA of RNA-DNA hybrids. This Enterococcus faecalis (strain ATCC 700802 / V583) protein is Ribonuclease HIII.